The following is a 231-amino-acid chain: NADH-ubiquinone oxidoreductase chain 4 (231 aa).

6 helical membrane-spanning segments follow: residues 1 to 21 (PIAGSMVLAAILLKLGGYGII), 34 to 54 (MFLPFIVLALWGAVLANLTCL), 63 to 85 (IAYSSISHMGLVVATIIIQTPWG), 89 to 111 (AMALMIAHGFTSSALFCLANTTY), 128 to 148 (ILPMATTWWLLANLMNIAIPP), and 169 to 189 (TIILLGLSMLITACYSLHMLL).

The protein belongs to the complex I subunit 4 family.

It is found in the mitochondrion membrane. It catalyses the reaction a ubiquinone + NADH + 5 H(+)(in) = a ubiquinol + NAD(+) + 4 H(+)(out). Functionally, core subunit of the mitochondrial membrane respiratory chain NADH dehydrogenase (Complex I) that is believed to belong to the minimal assembly required for catalysis. Complex I functions in the transfer of electrons from NADH to the respiratory chain. The immediate electron acceptor for the enzyme is believed to be ubiquinone. In Bothrops bilineatus (Green jararaca), this protein is NADH-ubiquinone oxidoreductase chain 4 (MT-ND4).